A 173-amino-acid chain; its full sequence is Peptide deformylase (173 aa).

Residues Cys-98 and His-140 each contribute to the Fe cation site. Residue Glu-141 is part of the active site. His-144 provides a ligand contact to Fe cation.

Belongs to the polypeptide deformylase family. It depends on Fe(2+) as a cofactor.

The enzyme catalyses N-terminal N-formyl-L-methionyl-[peptide] + H2O = N-terminal L-methionyl-[peptide] + formate. Its function is as follows. Removes the formyl group from the N-terminal Met of newly synthesized proteins. Requires at least a dipeptide for an efficient rate of reaction. N-terminal L-methionine is a prerequisite for activity but the enzyme has broad specificity at other positions. The sequence is that of Peptide deformylase from Caulobacter vibrioides (strain ATCC 19089 / CIP 103742 / CB 15) (Caulobacter crescentus).